A 293-amino-acid polypeptide reads, in one-letter code: Acetylglutamate kinase (293 aa).

Residues 60 to 61 (GG), arginine 82, and asparagine 188 each bind substrate.

It belongs to the acetylglutamate kinase family. ArgB subfamily.

It is found in the cytoplasm. The catalysed reaction is N-acetyl-L-glutamate + ATP = N-acetyl-L-glutamyl 5-phosphate + ADP. It participates in amino-acid biosynthesis; L-arginine biosynthesis; N(2)-acetyl-L-ornithine from L-glutamate: step 2/4. Its function is as follows. Catalyzes the ATP-dependent phosphorylation of N-acetyl-L-glutamate. The polypeptide is Acetylglutamate kinase (Methanothermobacter thermautotrophicus (strain ATCC 29096 / DSM 1053 / JCM 10044 / NBRC 100330 / Delta H) (Methanobacterium thermoautotrophicum)).